The primary structure comprises 845 residues: MSFTDQTYTRSCMHTCITRDHRLYGIVIISLLLLLDNSVFCQNENKVIDIKKDEKIWPYRICSGMSQATDIVRFGRNIQCPEYSPKDEGTEGILLIYKQNIVPYIFPVRIYYKELTIRYRYADVFSYYDMGDVTKKIPIMETEKTLIDMDGKCYSAARYVEGGAYMDAYDGDEHNHTVPFMLGYQNPDGGVTRYVTVDTHRPCLPGTWLRKTCTTVNCIVTDTYAKSRYPYDFFAISTGEIVDGSPFYTGDNDKKFSETYTKFKVYNEYERLEELTVSSTKKRTFDKIAFLEKRDYSISWEVKEEDQAPCQYVLWKASTQALMTKTVNNTYHFTSRELTATFGANDKEELKLAEKYPCVYEDAKETFEKMFSQNLKDTHVLNNDAKNNYSYVSHGGLILIFKPVKNKEIVQLMNITHLLNNTHANMTKHRRKRETSSSASSKGIYDLYGDLNVAQVQFAFNTLKSYINQALMSIADAWCRDQKRTNEIWGIISKINPSAALSAIFDKPVSARYLGDVISVSKCINVNQDSVRIYQTLKVPKTGEEWGDRMQCYSRPLVTFRLDNETASTIRTGQLGVDNEILLGNYRTELCQENSIRYFVAGAQIHVFQDYDFYHTIKLSDVDIVDTFVHLNISFLQNIDFQMLRLYTQEEQYASRLLDLETLLRDFNTYRQRIYKLEQAIVTKPYVPPAGMQQALQGLSGVGSVITGTLGAMQSLVSGVASFLQNPFGGTLSIILIGCIIVGVIIIYNRMNQSRGSPIDYYFPYVNQTLPQRQLQQHVGDPPSYDESIGSSHTYSKEDALLMLKAMKELDKSEKEAQIEATKSQPSIIDRIRRRGYTTLSSMNI.

A signal peptide spans 1–41 (MSFTDQTYTRSCMHTCITRDHRLYGIVIISLLLLLDNSVFC). The Virion surface portion of the chain corresponds to 42–727 (QNENKVIDIK…SGVASFLQNP (686 aa)). 5 cysteine pairs are disulfide-bonded: Cys62–Cys523, Cys80–Cys479, Cys153–Cys218, Cys310–Cys358, and Cys552–Cys591. The segment at 120-126 (RYADVFS) is involved in fusion and/or binding to host membrane. N-linked (GlcNAc...) asparagine; by host glycosylation occurs at Asn175. Residues 204 to 212 (LPGTWLRKT) are involved in fusion and/or binding to host membrane. Residues Asn328, Asn388, Asn414, Asn420, Asn425, Asn564, and Asn632 are each glycosylated (N-linked (GlcNAc...) asparagine; by host). The hydrophobic membrane proximal region stretch occupies residues 677–725 (LEQAIVTKPYVPPAGMQQALQGLSGVGSVITGTLGAMQSLVSGVASFLQ). Residues 728–748 (FGGTLSIILIGCIIVGVIIIY) form a helical membrane-spanning segment. Over 749-845 (NRMNQSRGSP…GYTTLSSMNI (97 aa)) the chain is Intravirion. Residues 837–840 (YTTL) carry the Internalization motif motif.

Belongs to the herpesviridae glycoprotein B family. Homotrimer; disulfide-linked. Binds to heparan sulfate proteoglycans. Interacts with gH/gL heterodimer. A proteolytic cleavage by host furin generates two subunits that remain linked by disulfide bonds.

It is found in the virion membrane. It localises to the host cell membrane. Its subcellular location is the host endosome membrane. The protein resides in the host Golgi apparatus membrane. Functionally, envelope glycoprotein that forms spikes at the surface of virion envelope. Essential for the initial attachment to heparan sulfate moieties of the host cell surface proteoglycans. Involved in fusion of viral and cellular membranes leading to virus entry into the host cell. Following initial binding to its host receptors, membrane fusion is mediated by the fusion machinery composed at least of gB and the heterodimer gH/gL. May be involved in the fusion between the virion envelope and the outer nuclear membrane during virion egress. In Elephas maximus (Indian elephant), this protein is Envelope glycoprotein B.